Reading from the N-terminus, the 496-residue chain is Glycerol kinase (496 aa).

Thr-12 lines the ADP pocket. Residues Thr-12, Thr-13, and Ser-14 each contribute to the ATP site. Residue Thr-12 participates in sn-glycerol 3-phosphate binding. Arg-16 contacts ADP. The sn-glycerol 3-phosphate site is built by Arg-82, Glu-83, and Tyr-134. Arg-82, Glu-83, and Tyr-134 together coordinate glycerol. His-230 is modified (phosphohistidine; by HPr). Asp-244 is a sn-glycerol 3-phosphate binding site. Glycerol contacts are provided by Asp-244 and Gln-245. Thr-266 and Gly-309 together coordinate ADP. Residues Thr-266, Gly-309, Gln-313, and Gly-410 each coordinate ATP. Gly-410 and Asn-414 together coordinate ADP.

It belongs to the FGGY kinase family. In terms of assembly, homotetramer and homodimer (in equilibrium). The phosphoenolpyruvate-dependent sugar phosphotransferase system (PTS), including enzyme I, and histidine-containing protein (HPr) are required for the phosphorylation, which leads to the activation of the enzyme.

It carries out the reaction glycerol + ATP = sn-glycerol 3-phosphate + ADP + H(+). Its pathway is polyol metabolism; glycerol degradation via glycerol kinase pathway; sn-glycerol 3-phosphate from glycerol: step 1/1. Its activity is regulated as follows. Activated by phosphorylation and inhibited by fructose 1,6-bisphosphate (FBP). Key enzyme in the regulation of glycerol uptake and metabolism. Catalyzes the phosphorylation of glycerol to yield sn-glycerol 3-phosphate. This chain is Glycerol kinase, found in Geobacillus kaustophilus (strain HTA426).